The following is a 659-amino-acid chain: tRNA 5-methylaminomethyl-2-thiouridine biosynthesis bifunctional protein MnmC (659 aa).

Residues 1–236 form a tRNA (mnm(5)s(2)U34)-methyltransferase region; sequence MKPVMPHAQL…KWEILRGEFL (236 aa). Residues 267–659 are FAD-dependent cmnm(5)s(2)U34 oxidoreductase; it reads IGAGLAGCAT…FALRRLIRGK (393 aa).

This sequence in the N-terminal section; belongs to the methyltransferase superfamily. tRNA (mnm(5)s(2)U34)-methyltransferase family. It in the C-terminal section; belongs to the DAO family. It depends on FAD as a cofactor.

Its subcellular location is the cytoplasm. The catalysed reaction is 5-aminomethyl-2-thiouridine(34) in tRNA + S-adenosyl-L-methionine = 5-methylaminomethyl-2-thiouridine(34) in tRNA + S-adenosyl-L-homocysteine + H(+). Its function is as follows. Catalyzes the last two steps in the biosynthesis of 5-methylaminomethyl-2-thiouridine (mnm(5)s(2)U) at the wobble position (U34) in tRNA. Catalyzes the FAD-dependent demodification of cmnm(5)s(2)U34 to nm(5)s(2)U34, followed by the transfer of a methyl group from S-adenosyl-L-methionine to nm(5)s(2)U34, to form mnm(5)s(2)U34. In Pseudomonas fluorescens (strain Pf0-1), this protein is tRNA 5-methylaminomethyl-2-thiouridine biosynthesis bifunctional protein MnmC.